Reading from the N-terminus, the 200-residue chain is Large ribosomal subunit protein uL4 (200 aa).

Residues Arg-43–Asp-71 are disordered.

This sequence belongs to the universal ribosomal protein uL4 family. As to quaternary structure, part of the 50S ribosomal subunit.

One of the primary rRNA binding proteins, this protein initially binds near the 5'-end of the 23S rRNA. It is important during the early stages of 50S assembly. It makes multiple contacts with different domains of the 23S rRNA in the assembled 50S subunit and ribosome. In terms of biological role, forms part of the polypeptide exit tunnel. In Histophilus somni (strain 129Pt) (Haemophilus somnus), this protein is Large ribosomal subunit protein uL4.